The following is a 251-amino-acid chain: Orcokinin peptides type A (251 aa).

An N-terminal signal peptide occupies residues 1–20 (MTAQMFTIALLLSLSAIAAA). Propeptides lie at residues 21–46 (GTIK…GAPV), 225–231 (DYDVFPD), and 249–251 (NVE).

It belongs to the orcokinin family.

The protein resides in the secreted. In terms of biological role, myotropic peptides that enhance both the frequency and amplitude of spontaneous hindgut contractions. The polypeptide is Orcokinin peptides type A (Procambarus clarkii (Red swamp crayfish)).